A 187-amino-acid polypeptide reads, in one-letter code: Calcium and integrin-binding family member 2 (187 aa).

EF-hand domains follow at residues 66-101 (KENPFRNRIVESFSEDGQGNLSFNDFVDMFSVLSEM), 103-138 (PRELKAIYAFKIYDFNVDNYICKEDLEKTLNKLTKE), and 144-179 (EVNLVCEKAIEEADLDGDNKLSFADFENMISRAPDF). Ca(2+) contacts are provided by aspartate 157, aspartate 159, aspartate 161, lysine 163, and aspartate 168.

In terms of assembly, monomer. Homodimer. As to expression, enriched in central and striolar hair cells.

The protein resides in the cytoplasm. The protein localises to the cell projection. Its subcellular location is the stereocilium. It localises to the photoreceptor inner segment. It is found in the cilium. The protein resides in the photoreceptor outer segment. The protein localises to the cell membrane. Its subcellular location is the sarcolemma. Calcium- and integrin-binding protein. Plays a role in intracellular calcium homeostasis. Critical for proper photoreceptor cell maintenance and function. Essential for development, maintenance and function of mechanosensory hair cells. The polypeptide is Calcium and integrin-binding family member 2 (Danio rerio (Zebrafish)).